A 482-amino-acid polypeptide reads, in one-letter code: Glutamate--tRNA ligase (482 aa).

The 'HIGH' region signature appears at Pro-9 to Asn-19. The Zn(2+) site is built by Cys-106, Cys-108, Cys-133, and Asp-135. A 'KMSKS' region motif is present at residues Lys-250–Arg-254. Lys-253 provides a ligand contact to ATP.

This sequence belongs to the class-I aminoacyl-tRNA synthetase family. Glutamate--tRNA ligase type 1 subfamily. As to quaternary structure, monomer. Zn(2+) is required as a cofactor.

It is found in the cytoplasm. It catalyses the reaction tRNA(Glu) + L-glutamate + ATP = L-glutamyl-tRNA(Glu) + AMP + diphosphate. Catalyzes the attachment of glutamate to tRNA(Glu) in a two-step reaction: glutamate is first activated by ATP to form Glu-AMP and then transferred to the acceptor end of tRNA(Glu). This Symbiobacterium thermophilum (strain DSM 24528 / JCM 14929 / IAM 14863 / T) protein is Glutamate--tRNA ligase.